The chain runs to 160 residues: Type IV major fimbrial protein FimA (160 aa).

Residues 1 to 7 (MKSLQKG) constitute a propeptide, leader sequence. Phenylalanine 8 carries the N-methylphenylalanine modification. The helical transmembrane segment at 8–28 (FTLIELMIVVAIIGILAAIAI) threads the bilayer.

The protein belongs to the N-Me-Phe pilin family. In terms of assembly, the pili are polar flexible filaments of about 5.4 nanometers diameter and 2.5 micrometers average length; they consist of only a single polypeptide chain arranged in a helical configuration of five subunits per turn in the assembled pilus.

It localises to the fimbrium. The protein resides in the membrane. Its function is as follows. Major component of the type IV fimbriae that plays an essential role in twitching motility, natural transformation, and protease secretion. The chain is Type IV major fimbrial protein FimA (fimA) from Dichelobacter nodosus (Bacteroides nodosus).